Here is a 469-residue protein sequence, read N- to C-terminus: ATP-dependent protease ATPase subunit HslU (469 aa).

ATP is bound by residues isoleucine 24, 66-71, aspartate 282, glutamate 347, and arginine 419; that span reads GVGKTE.

Belongs to the ClpX chaperone family. HslU subfamily. In terms of assembly, a double ring-shaped homohexamer of HslV is capped on each side by a ring-shaped HslU homohexamer. The assembly of the HslU/HslV complex is dependent on binding of ATP.

It is found in the cytoplasm. In terms of biological role, ATPase subunit of a proteasome-like degradation complex; this subunit has chaperone activity. The binding of ATP and its subsequent hydrolysis by HslU are essential for unfolding of protein substrates subsequently hydrolyzed by HslV. HslU recognizes the N-terminal part of its protein substrates and unfolds these before they are guided to HslV for hydrolysis. In Listeria monocytogenes serotype 4a (strain HCC23), this protein is ATP-dependent protease ATPase subunit HslU.